Here is a 461-residue protein sequence, read N- to C-terminus: Argininosuccinate lyase (461 aa).

It belongs to the lyase 1 family. Argininosuccinate lyase subfamily.

The protein localises to the cytoplasm. It carries out the reaction 2-(N(omega)-L-arginino)succinate = fumarate + L-arginine. It functions in the pathway amino-acid biosynthesis; L-arginine biosynthesis; L-arginine from L-ornithine and carbamoyl phosphate: step 3/3. This is Argininosuccinate lyase from Shewanella piezotolerans (strain WP3 / JCM 13877).